Reading from the N-terminus, the 309-residue chain is METDSIDSVIDDDEIHQKHQFSSTKSQGGATVVISPATSVYELLECPVCTNSMYPPIHQCHNGHTLCSTCKSRVHNRCPTCRQELGDIRCLALEKVAESLELPCKYYNLGCLGIFPYYSKLKHESQCNFRPYSCPYAGSECAAVGDITFLVAHLRDDHKVDMHTGCTFNHRYVKSNPREVENATWMLTVFQCFGQYFCLHFEAFQLGMAPVYMAFLRFMGDEDDARNYTYSLEVGGSGRKQTWEGTPRSVRDSHRKVRDSHDGLIIQRNMALFFSGGDKKELKLRVTGRIWKEQQNPDSGVCITSMCSS.

The RING-type zinc-finger motif lies at 46–82 (CPVCTNSMYPPIHQCHNGHTLCSTCKSRVHNRCPTCR). Residues 96–289 (VAESLELPCK…KELKLRVTGR (194 aa)) are SBD. An SIAH-type zinc finger spans residues 99–159 (SLELPCKYYN…LVAHLRDDHK (61 aa)). Zn(2+)-binding residues include Cys-104, Cys-111, His-123, Cys-127, Cys-134, Cys-141, His-153, and His-158.

This sequence belongs to the SINA (Seven in absentia) family. As to quaternary structure, homodimer; homodimerization is essential for its function. Interacts with UBC28 and NAC021/NAC022. Interacts with SINAT6. Interacts with ATG6 and TRAF1A. Interacts with WAV3. Interacts with FREE1. In terms of tissue distribution, expressed at low level in the vascular tissue of mature roots. Expressed in lateral roots and in elongation zone of the main root upon stimulation by auxin. Colocalizes with NAC021/NAC022.

Its subcellular location is the nucleus. The protein localises to the cytoplasm. The catalysed reaction is S-ubiquitinyl-[E2 ubiquitin-conjugating enzyme]-L-cysteine + [acceptor protein]-L-lysine = [E2 ubiquitin-conjugating enzyme]-L-cysteine + N(6)-ubiquitinyl-[acceptor protein]-L-lysine.. It functions in the pathway protein modification; protein ubiquitination. In terms of biological role, E3 ubiquitin-protein ligase that mediates ubiquitination and subsequent proteasomal degradation of target proteins. E3 ubiquitin ligases accept ubiquitin from an E2 ubiquitin-conjugating enzyme in the form of a thioester and then directly transfers the ubiquitin to targeted substrates. Mediates the ubiquitination and proteasomal-dependent degradation of NAC021/NAC022, a transcription activator that functions downstream of the auxin signals, thereby acting as a down-regulator of auxin signals. Involved in the formation of lateral roots. Is antagonist to SINAT1, SINAT2, SINAT3 and SINAT4 by suppressing FREE1 ubiquitination and degradation mediated by SINAT1, SINAT2, SINAT3 and SINAT4, and promoting FREE1 accumulation. This chain is E3 ubiquitin-protein ligase SINAT5, found in Arabidopsis thaliana (Mouse-ear cress).